Consider the following 274-residue polypeptide: Large ribosomal subunit protein uL2 (274 aa).

Residues 225 to 274 are disordered; the sequence is MNPVDHPHGGGEGRSPIGRHPVTPWGKPTLGVKTRKKNKASSKLIIKRRK. Basic residues predominate over residues 257-274; sequence KTRKKNKASSKLIIKRRK.

This sequence belongs to the universal ribosomal protein uL2 family. Part of the 50S ribosomal subunit. Forms a bridge to the 30S subunit in the 70S ribosome.

One of the primary rRNA binding proteins. Required for association of the 30S and 50S subunits to form the 70S ribosome, for tRNA binding and peptide bond formation. It has been suggested to have peptidyltransferase activity; this is somewhat controversial. Makes several contacts with the 16S rRNA in the 70S ribosome. This Carboxydothermus hydrogenoformans (strain ATCC BAA-161 / DSM 6008 / Z-2901) protein is Large ribosomal subunit protein uL2.